The following is a 369-amino-acid chain: Small ribosomal subunit biogenesis GTPase RsgA (369 aa).

Residues 88-246 enclose the CP-type G domain; sequence RTVLERPPVA…LADTPGFNQP (159 aa). Residues 137–140 and 188–196 contribute to the GTP site; these read NKQD and GPSGVGKSS. The Zn(2+) site is built by Cys271, Cys276, His278, and Cys284. The interval 307–369 is disordered; it reads QNPENSRETD…DLDNLQEDWE (63 aa). Acidic residues predominate over residues 359 to 369; it reads TDLDNLQEDWE.

Belongs to the TRAFAC class YlqF/YawG GTPase family. RsgA subfamily. As to quaternary structure, monomer. Associates with 30S ribosomal subunit, binds 16S rRNA. Zn(2+) is required as a cofactor.

The protein localises to the cytoplasm. Functionally, one of several proteins that assist in the late maturation steps of the functional core of the 30S ribosomal subunit. Helps release RbfA from mature subunits. May play a role in the assembly of ribosomal proteins into the subunit. Circularly permuted GTPase that catalyzes slow GTP hydrolysis, GTPase activity is stimulated by the 30S ribosomal subunit. This Synechocystis sp. (strain ATCC 27184 / PCC 6803 / Kazusa) protein is Small ribosomal subunit biogenesis GTPase RsgA.